A 156-amino-acid chain; its full sequence is ATP synthase subunit b (156 aa).

The helical transmembrane segment at 7-27 (LVAQMVVFFILWWVVAKFIWP) threads the bilayer.

It belongs to the ATPase B chain family. F-type ATPases have 2 components, F(1) - the catalytic core - and F(0) - the membrane proton channel. F(1) has five subunits: alpha(3), beta(3), gamma(1), delta(1), epsilon(1). F(0) has three main subunits: a(1), b(2) and c(10-14). The alpha and beta chains form an alternating ring which encloses part of the gamma chain. F(1) is attached to F(0) by a central stalk formed by the gamma and epsilon chains, while a peripheral stalk is formed by the delta and b chains.

It is found in the cell inner membrane. Functionally, f(1)F(0) ATP synthase produces ATP from ADP in the presence of a proton or sodium gradient. F-type ATPases consist of two structural domains, F(1) containing the extramembraneous catalytic core and F(0) containing the membrane proton channel, linked together by a central stalk and a peripheral stalk. During catalysis, ATP synthesis in the catalytic domain of F(1) is coupled via a rotary mechanism of the central stalk subunits to proton translocation. Its function is as follows. Component of the F(0) channel, it forms part of the peripheral stalk, linking F(1) to F(0). This Ralstonia pickettii (strain 12J) protein is ATP synthase subunit b.